The chain runs to 158 residues: Phosphopantetheine adenylyltransferase (158 aa).

Position 8 (Ser8) interacts with substrate. ATP contacts are provided by residues 8-9 and His16; that span reads SF. Lys40, Thr72, and Arg86 together coordinate substrate. ATP is bound by residues 87-89, Glu97, and 122-128; these read GLR and HSFLSSS.

Belongs to the bacterial CoaD family. Homohexamer. Requires Mg(2+) as cofactor.

It is found in the cytoplasm. The catalysed reaction is (R)-4'-phosphopantetheine + ATP + H(+) = 3'-dephospho-CoA + diphosphate. Its pathway is cofactor biosynthesis; coenzyme A biosynthesis; CoA from (R)-pantothenate: step 4/5. In terms of biological role, reversibly transfers an adenylyl group from ATP to 4'-phosphopantetheine, yielding dephospho-CoA (dPCoA) and pyrophosphate. The chain is Phosphopantetheine adenylyltransferase from Prochlorococcus marinus (strain NATL1A).